We begin with the raw amino-acid sequence, 362 residues long: Alanine racemase (362 aa).

Catalysis depends on Lys-35, which acts as the Proton acceptor; specific for D-alanine. Lys-35 carries the N6-(pyridoxal phosphate)lysine modification. Arg-130 contacts substrate. Tyr-257 serves as the catalytic Proton acceptor; specific for L-alanine. Residue Met-305 participates in substrate binding.

The protein belongs to the alanine racemase family. Requires pyridoxal 5'-phosphate as cofactor.

It carries out the reaction L-alanine = D-alanine. Its pathway is amino-acid biosynthesis; D-alanine biosynthesis; D-alanine from L-alanine: step 1/1. Functionally, catalyzes the interconversion of L-alanine and D-alanine. May also act on other amino acids. In Nitrosomonas europaea (strain ATCC 19718 / CIP 103999 / KCTC 2705 / NBRC 14298), this protein is Alanine racemase (alr).